A 130-amino-acid chain; its full sequence is Small ribosomal subunit protein uS9 (130 aa).

Belongs to the universal ribosomal protein uS9 family.

The polypeptide is Small ribosomal subunit protein uS9 (Pseudomonas fluorescens (strain Pf0-1)).